We begin with the raw amino-acid sequence, 1199 residues long: RNA-binding protein 20 (1199 aa).

3 disordered regions span residues 1-55 (MVLA…PQAS), 163-186 (PSTA…SLPS), and 320-346 (ERPP…PASQ). Residues 25–42 (VMPGVQGPSVPQGQQGMQ) show a composition bias toward low complexity. Residues 43 to 52 (PLPPPPPPQP) are compositionally biased toward pro residues. Residues 170 to 183 (SPPSQTGGPGPSVS) show a composition bias toward low complexity. The U1-type zinc finger occupies 410-444 (HLPHICSICDKKVFDLKDWELHVKGKLHAQKCLLF). The RRM domain occupies 520 to 595 (RVVHICNLPE…EKLLIRMSTR (76 aa)). Residues 626–636 (EADRYGPERPR) are compositionally biased toward basic and acidic residues. Disordered stretches follow at residues 626–685 (EADR…NGED), 720–884 (REKY…YPTN), and 944–1077 (GETL…SQAC). The RS stretch occupies residues 630–649 (YGPERPRSRSPMSRSLSPRS). 5 positions are modified to phosphoserine: Ser637, Ser639, Ser642, Ser644, and Ser651. The span at 638-649 (RSPMSRSLSPRS) shows a compositional bias: low complexity. A compositionally biased stretch (basic and acidic residues) spans 667 to 685 (YAWRDEDRETVPRRENGED). Ser728 carries the post-translational modification Phosphoserine. Composition is skewed to basic and acidic residues over residues 739 to 758 (KGRE…DKYP), 770 to 831 (RKEE…KESQ), and 859 to 868 (ENTRTKKGQD). Ser787 carries the post-translational modification Phosphoserine. Ser871, Ser873, and Ser955 each carry phosphoserine. Residues 962 to 971 (VPSTSASCPN) show a composition bias toward polar residues. Ser991, Ser1026, Ser1038, Ser1049, Ser1054, Ser1058, Ser1070, Ser1088, and Ser1093 each carry phosphoserine. Residues 1042–1055 (DDCKARGSPEDGSH) show a composition bias toward basic and acidic residues. A compositionally biased stretch (polar residues) spans 1067 to 1077 (PTESDLQSQAC). The segment at 1133 to 1164 (FYCKLCGLFYTSEEAAKVSHCRSTVHYRNLQK) adopts a Matrin-type zinc-finger fold. The tract at residues 1172–1199 (EGLKETEGTDSPSPERGGIGPHLERKKL) is disordered. Phosphoserine is present on residues Ser1182 and Ser1184.

In terms of assembly, associates with components of the U1 and U2 U1 small nuclear ribonucleoprotein complexes. Phosphorylation regulates the subcellular localization. Phosphorylation of Ser-637 and Ser-639 in the RS (arginine/serine-rich) region promotes nuclear localization of the protein. In contrast, phosphorylation of the C-terminal disordered region promotes localization to cytoplasmic ribonucleoprotein granules. Predominantly expressed in striated muscle, with highest expression in the heart. In differentiating myoblasts, expression correlates with sarcomere assembly: expression peaks when alpha-actinin is localized mainly in mature Z bodies within the nascent myofiber and expression declines as the sarcomeres continue to mature. Also expressed in kidney.

The protein resides in the nucleus. The protein localises to the cytoplasm. It localises to the cytoplasmic ribonucleoprotein granule. In terms of biological role, RNA-binding protein that acts as a regulator of mRNA splicing of a subset of genes encoding key structural proteins involved in cardiac development, such as TTN (Titin), CACNA1C, CAMK2D or PDLIM5/ENH. Acts as a repressor of mRNA splicing: specifically binds the 5'UCUU-3' motif that is predominantly found within intronic sequences of pre-mRNAs, leading to the exclusion of specific exons in target transcripts. RBM20-mediated exon skipping is hormone-dependent and is essential for TTN isoform transition in both cardiac and skeletal muscles. RBM20-mediated exon skipping of TTN provides substrates for the formation of circular RNA (circRNAs) from the TTN transcripts. Together with RBM24, promotes the expression of short isoforms of PDLIM5/ENH in cardiomyocytes. This chain is RNA-binding protein 20, found in Mus musculus (Mouse).